We begin with the raw amino-acid sequence, 1035 residues long: Ephrin type-A receptor 6 (1035 aa).

Positions 1–22 (MGGCEVREFLLQFGFFLPLLTA) are cleaved as a signal peptide. At 23 to 549 (WTGDCSHVSN…MAAEQGQILV (527 aa)) the chain is on the extracellular side. One can recognise an Eph LBD domain in the interval 33 to 211 (QVVLLDTSTV…FYKKCPFTVR (179 aa)). Fibronectin type-III domains are found at residues 330–440 (PPSA…TDQD) and 441–536 (APSL…TGDE). N-linked (GlcNAc...) asparagine glycans are attached at residues Asn-342, Asn-396, and Asn-409. The chain crosses the membrane as a helical span at residues 550–570 (IATAAVGGFTLLVILTLFFLI). Over 571–1035 (TGRCQWYIKA…MHIQEKGFHV (465 aa)) the chain is Cytoplasmic. Tyr-605 and Tyr-611 each carry phosphotyrosine; by autocatalysis. The Protein kinase domain occupies 630-943 (IRIERVIGAG…RNPSALHTLV (314 aa)). ATP contacts are provided by residues 636–644 (IGAGEFGEV) and Lys-662. The Proton acceptor role is filled by Asp-797. Tyr-830 and Tyr-977 each carry phosphotyrosine; by autocatalysis. The region spanning 960–1024 (PLFVTVGDWL…VSSIQTLRLH (65 aa)) is the SAM domain. A PDZ-binding motif is present at residues 1033–1035 (FHV).

It belongs to the protein kinase superfamily. Tyr protein kinase family. Ephrin receptor subfamily. Heterotetramer upon binding of the ligand. The heterotetramer is composed of an ephrin dimer and a receptor dimer. Oligomerization is probably required to induce biological responses. Interacts (via SAM domain) with ANKS1A (via SAM domain). Brain.

It is found in the membrane. It catalyses the reaction L-tyrosyl-[protein] + ATP = O-phospho-L-tyrosyl-[protein] + ADP + H(+). Receptor tyrosine kinase which binds promiscuously GPI-anchored ephrin-A family ligands residing on adjacent cells, leading to contact-dependent bidirectional signaling into neighboring cells. The signaling pathway downstream of the receptor is referred to as forward signaling while the signaling pathway downstream of the ephrin ligand is referred to as reverse signaling. This is Ephrin type-A receptor 6 (Epha6) from Rattus norvegicus (Rat).